A 315-amino-acid chain; its full sequence is Methionyl-tRNA formyltransferase (315 aa).

113 to 116 (SLLP) contacts (6S)-5,6,7,8-tetrahydrofolate.

Belongs to the Fmt family.

It carries out the reaction L-methionyl-tRNA(fMet) + (6R)-10-formyltetrahydrofolate = N-formyl-L-methionyl-tRNA(fMet) + (6S)-5,6,7,8-tetrahydrofolate + H(+). Attaches a formyl group to the free amino group of methionyl-tRNA(fMet). The formyl group appears to play a dual role in the initiator identity of N-formylmethionyl-tRNA by promoting its recognition by IF2 and preventing the misappropriation of this tRNA by the elongation apparatus. The sequence is that of Methionyl-tRNA formyltransferase from Salmonella gallinarum (strain 287/91 / NCTC 13346).